The chain runs to 480 residues: G-rich sequence factor 1 (480 aa).

Residues 1–117 (MAGTRWVLGA…AAAAVPTRSY (117 aa)) constitute a mitochondrion transit peptide. RRM domains are found at residues 122-246 (KTTY…SSPV) and 250-326 (GVVR…PSRR). The residue at position 244 (serine 244) is a Phosphoserine. A Phosphoserine modification is found at serine 335. One can recognise an RRM 3 domain in the interval 401 to 480 (HFVHMRGLPF…LFLNSCPKGK (80 aa)).

As to quaternary structure, monomer. Found in a complex with DDX28, DHX30, FASTKD2 and FASTKD5. Interacts with the mitochondrial RNase P complex subunit TRMT10C/MRPP1. Interacts with the 2 components of the mitochondrial degradosome complex, PNPT1 and SUPV3L1, in an RNA-dependent manner.

It is found in the mitochondrion matrix. The protein resides in the cytoplasm. Its function is as follows. Regulator of post-transcriptional mitochondrial gene expression, required for assembly of the mitochondrial ribosome and for recruitment of mRNA and lncRNA. Binds RNAs containing the 14 base G-rich element. Preferentially binds RNAs transcribed from three contiguous genes on the light strand of mtDNA, the ND6 mRNA, and the long non-coding RNAs for MT-CYB and MT-ND5, each of which contains multiple consensus binding sequences. Involved in the degradosome-mediated decay of non-coding mitochondrial transcripts (MT-ncRNA) and tRNA-like molecules. Acts by unwinding G-quadruplex RNA structures in MT-ncRNA, thus facilitating their degradation by the degradosome. G-quadruplexes (G4) are non-canonical 4 stranded structures formed by transcripts from the light strand of mtDNA. This Homo sapiens (Human) protein is G-rich sequence factor 1 (GRSF1).